A 701-amino-acid chain; its full sequence is Ubiquitin thioesterase zranb1-B (701 aa).

3 consecutive RanBP2-type zinc fingers follow at residues Glu-3–Ser-33, Thr-79–Thr-108, and Ile-143–Asn-173. Residues Cys-10, Cys-13, Cys-24, Cys-27, Cys-85, Cys-88, Cys-99, and Cys-102 each coordinate Zn(2+). Polar residues predominate over residues Thr-108–Gly-121. Residues Thr-108–Ile-129 form a disordered region. Zn(2+)-binding residues include Cys-150, Cys-153, Cys-164, and Cys-167. The disordered stretch occupies residues Arg-197–Asp-220. Residues Cys-202 to Thr-214 show a composition bias toward polar residues. ANK repeat units lie at residues Arg-253–Asp-283 and Tyr-306–Ala-333. Positions Leu-425–Met-585 constitute an OTU domain. Cys-436 acts as the Nucleophile in catalysis. His-578 functions as the Proton acceptor in the catalytic mechanism.

The protein belongs to the peptidase C64 family.

The protein resides in the cytoplasm. Its subcellular location is the nucleus. It catalyses the reaction Thiol-dependent hydrolysis of ester, thioester, amide, peptide and isopeptide bonds formed by the C-terminal Gly of ubiquitin (a 76-residue protein attached to proteins as an intracellular targeting signal).. Ubiquitin thioesterase, which specifically hydrolyzes 'Lys-29'-linked and 'Lys-33'-linked diubiquitin. Also cleaves 'Lys-63'-linked chains, but with 40-fold less efficiency compared to 'Lys-29'-linked ones. Positive regulator of the Wnt signaling pathway that deubiquitinates apc protein, a negative regulator of Wnt-mediated transcription. Acts as a regulator of autophagy by mediating deubiquitination of pik3c3/vps34, thereby promoting autophagosome maturation. Plays a role in the regulation of cell morphology and cytoskeletal organization. Required in the stress fiber dynamics and cell migration. In Xenopus laevis (African clawed frog), this protein is Ubiquitin thioesterase zranb1-B (zranb1-b).